Consider the following 514-residue polypeptide: Lysine--tRNA ligase (514 aa).

2 residues coordinate Mg(2+): E424 and E431.

The protein belongs to the class-II aminoacyl-tRNA synthetase family. As to quaternary structure, homodimer. The cofactor is Mg(2+).

The protein localises to the cytoplasm. The enzyme catalyses tRNA(Lys) + L-lysine + ATP = L-lysyl-tRNA(Lys) + AMP + diphosphate. This is Lysine--tRNA ligase from Cupriavidus necator (strain ATCC 17699 / DSM 428 / KCTC 22496 / NCIMB 10442 / H16 / Stanier 337) (Ralstonia eutropha).